The primary structure comprises 166 residues: UPF0304 protein VC_1871 (166 aa).

Belongs to the UPF0304 family.

This chain is UPF0304 protein VC_1871, found in Vibrio cholerae serotype O1 (strain ATCC 39315 / El Tor Inaba N16961).